An 833-amino-acid polypeptide reads, in one-letter code: Enhancer of filamentation 1 (833 aa).

The SH3 domain occupies 3–65 (ARNLMARALY…PGNRVKLLIG (63 aa)). Phosphotyrosine is present on residues Tyr91, Tyr163, Tyr165, Tyr176, Tyr188, Tyr213, and Tyr222. The segment at 237 to 258 (EKEYDFPPPMKQDGKPDTRPEG) is disordered. Residues 248 to 258 (QDGKPDTRPEG) are compositionally biased toward basic and acidic residues. At Ser295 the chain carries Phosphoserine. 3 disordered regions span residues 297–316 (SLHH…SDAY), 326–403 (EVPT…RLRL), and 560–623 (PANS…SERS). Residues 304-314 (QLGQSGDTQSD) show a composition bias toward polar residues. Tyr316 carries the post-translational modification Phosphotyrosine. Over residues 331 to 343 (TSEKANPEERDGV) the composition is skewed to basic and acidic residues. The segment at 350 to 833 (NPADAKGSRD…KRSLLEMATF (484 aa)) is interacts with CTTN. Residues 359-362 (DVVD) carry the Caspase cleavage related site motif. Residue Ser368 is modified to Phosphoserine. Residues 368–396 (SFSSTGSTRSNMSTSSTSSKESSLSASPS) show a composition bias toward low complexity. Over residues 564–586 (HLKNGPNSIMNSSEYTHPGSQMQ) the composition is skewed to polar residues. The tract at residues 709-759 (FYYDQCETHFISLLNAIDALFSCVSSAQPPRIFVAHSKFVILSAHKLVFIG) is divergent helix-loop-helix motif. The segment at 709–833 (FYYDQCETHF…KRSLLEMATF (125 aa)) is required for interaction with PLK1. At Ser779 the chain carries Phosphoserine. Position 803 is a phosphothreonine (Thr803).

This sequence belongs to the CAS family. In terms of assembly, homodimer. Forms heterodimers with BCAR1/p130cas. Forms complexes with PTK2B/RAFTK, adapter protein CRKL and LYN kinase. Part of a complex composed of NEDD9, AURKA and CTTN; within the complex NEDD9 acts as a scaffold protein and is required for complex formation. Part of a ternary complex composed of SMAD3, ITCH/AIP4 and NEDD9/HEF1; within the complex NEDD9/HEF1 interacts (via N-terminus) with ITCH/AIP4 (via WW domains); the complex mediates ubiquitination and proteasomal degradation of NEDD9/HEF1. Interacts with SMAD3; the interaction promotes NEDD9 ubiquitination and proteasomal degradation. Interacts with ID2. Interacts with CTTN (via N-terminus). Interacts with MICAL. Interacts with TXNL4/DIM1. Interacts with BCAR3 (via Ras-GEF domain). Interacts with SH2D3C isoform 1 and isoform 2. Interacts with ECT2. Interacts with PTPN11/SHP-2 (via SH2 domains); the interaction is enhanced when NEDD9/CAS-L is tyrosine phosphorylated. Interacts (via C-terminus) with PLK1 (via polo box domains). Interacts with NKX2-5. Interacts with SMAD3; the interaction is inhibited by oxidation of NEDD9. Interacts with NEDD9/HEF1; interaction is induced by CXCL12 promotion of ABL-mediated phosphorylation of NEDD9/HEF1. Interacts (via SH3 domain) with PTK2/FAK. Interacts with FYN; in the presence of PTK2. Interacts with INPPL1/SHIP2. Polyubiquitinated by ITCH/AIP4, leading to proteasomal degradation. Post-translationally, PTK2/FAK1 phosphorylates the protein at the YDYVHL motif (conserved among all cas proteins) following integrin stimulation. The SRC family kinases (FYN, SRC, LCK and CRK) are recruited to the phosphorylated sites and can phosphorylate other tyrosine residues. Ligation of either integrin beta-1 or B-cell antigen receptor on tonsillar B-cells and B-cell lines promotes tyrosine phosphorylation and both integrin and BCR-mediated tyrosine phosphorylation requires an intact actin network. Phosphorylation is required to recruit NEDD9 to T-cell receptor microclusters at the periphery of newly formed immunological synapses. In fibroblasts transformation with oncogene v-ABL results in an increase in tyrosine phosphorylation. Transiently phosphorylated following CD3 cross-linking and this phosphorylated form binds to CRKL and C3G. A mutant lacking the SH3 domain is phosphorylated upon CD3 cross-linking but not upon integrin beta-1 cross-linking. Tyrosine phosphorylation occurs upon stimulation of the G-protein coupled C1a calcitonin receptor. Calcitonin-stimulated tyrosine phosphorylation is mediated by calcium- and protein kinase C-dependent mechanisms and requires the integrity of the actin cytoskeleton. Phosphorylation at Ser-368 induces proteasomal degradation. Phosphorylated by LYN. Phosphorylation at Ser-779 by CSNK1D or CSNK1E, or phosphorylation of Thr-803 by CSNK1E enhances the interaction of NEDD9 with PLK1. Expressed in splenic lymphocytes (at protein level). Expressed in T-cells (at protein level). Expressed in the thymus. Expressed throughout the brain however particularly abundant in the cortex and hippocampus.

Its subcellular location is the cytoplasm. The protein localises to the cell cortex. It localises to the nucleus. The protein resides in the golgi apparatus. It is found in the cell projection. Its subcellular location is the lamellipodium. The protein localises to the cell junction. It localises to the focal adhesion. The protein resides in the cytoskeleton. It is found in the spindle pole. Its subcellular location is the cilium. The protein localises to the cilium basal body. It localises to the basolateral cell membrane. Its function is as follows. Scaffolding protein which plays a central coordinating role for tyrosine-kinase-based signaling related to cell adhesion. As a focal adhesion protein, plays a role in embryonic fibroblast migration. May play an important role in integrin beta-1 or B cell antigen receptor (BCR) mediated signaling in B- and T-cells. Integrin beta-1 stimulation leads to recruitment of various proteins including CRKl and SHPTP2 to the tyrosine phosphorylated form. Promotes adhesion and migration of lymphocytes; as a result required for the correct migration of lymphocytes to the spleen and other secondary lymphoid organs. Plays a role in the organization of T-cell F-actin cortical cytoskeleton and the centralization of T-cell receptor microclusters at the immunological synapse. Negatively regulates cilia outgrowth in polarized cysts. Modulates cilia disassembly via activation of AURKA-mediated phosphorylation of HDAC6 and subsequent deacetylation of alpha-tubulin. Positively regulates RANKL-induced osteoclastogenesis. Required for the maintenance of hippocampal dendritic spines in the dentate gyrus and CA1 regions, thereby involved in spatial learning and memory. This Mus musculus (Mouse) protein is Enhancer of filamentation 1.